The sequence spans 862 residues: Pentatricopeptide repeat-containing protein At1g74850, chloroplastic (862 aa).

A chloroplast-targeting transit peptide spans 1 to 66; that stretch reads MNLAIPNPNS…DLVLGNPSVS (66 aa). PPR repeat units follow at residues 104-139, 140-174, 175-209, 210-245, 246-280, 281-315, 316-350, 351-385, 386-420, 421-455, 456-490, 491-525, 526-560, 561-595, and 596-630; these read SLND…WCKP, NEHI…GVSR, SVFS…KISP, SILT…GIQP, DIVT…GIVP, DLTT…GSLP, DITS…GCTP, NANT…NTDP, DAAT…NIEP, DMET…DIVP, SSKA…GSNP, SIET…GIPR, NRDT…RCDP, DERT…DILP, and SIMC…RVSN. Positions 713 to 801 constitute a Smr domain; sequence VDVHRMSEGG…RIMCQRSQLK (89 aa). The interval 831-862 is disordered; that stretch reads GTRASTSSDTNHSGNPTQRRTRTKKELAGSTA. Over residues 833–848 the composition is skewed to polar residues; sequence RASTSSDTNHSGNPTQ.

It belongs to the PPR family. P subfamily. As to expression, mostly expressed in leaves, stems and flowers, but barely in roots.

It is found in the plastid. Its subcellular location is the chloroplast. Involved in plastid gene expression. The sequence is that of Pentatricopeptide repeat-containing protein At1g74850, chloroplastic (PTAC2) from Arabidopsis thaliana (Mouse-ear cress).